The following is a 300-amino-acid chain: Putative 1-phosphofructokinase (300 aa).

ATP contacts are provided by residues 214-219 (SDGAQG) and 246-247 (GD). Residue Asp247 is the Proton acceptor of the active site.

This sequence belongs to the carbohydrate kinase PfkB family.

The catalysed reaction is beta-D-fructose 1-phosphate + ATP = beta-D-fructose 1,6-bisphosphate + ADP + H(+). Functionally, catalyzes the ATP-dependent phosphorylation of fructose-l-phosphate to fructose-l,6-bisphosphate. This is Putative 1-phosphofructokinase (fruK) from Mycoplasma pneumoniae (strain ATCC 29342 / M129 / Subtype 1) (Mycoplasmoides pneumoniae).